The sequence spans 713 residues: Probable 1-deoxy-D-xylulose-5-phosphate synthase 2, chloroplastic (713 aa).

The transit peptide at 1–30 (MALQASSSPSMFRAIPTNTNASCRRKLQVR) directs the protein to the chloroplast. Residues H140 and 181 to 183 (GHS) each bind thiamine diphosphate. D212 is a Mg(2+) binding site. Thiamine diphosphate is bound by residues 213–214 (GA), N241, Y362, and E444. N241 is a binding site for Mg(2+).

This sequence belongs to the transketolase family. DXPS subfamily. Homodimer. It depends on Mg(2+) as a cofactor. Thiamine diphosphate is required as a cofactor.

It is found in the plastid. It localises to the chloroplast. It carries out the reaction D-glyceraldehyde 3-phosphate + pyruvate + H(+) = 1-deoxy-D-xylulose 5-phosphate + CO2. It functions in the pathway metabolic intermediate biosynthesis; 1-deoxy-D-xylulose 5-phosphate biosynthesis; 1-deoxy-D-xylulose 5-phosphate from D-glyceraldehyde 3-phosphate and pyruvate: step 1/1. In terms of biological role, catalyzes the acyloin condensation reaction between C atoms 2 and 3 of pyruvate and glyceraldehyde 3-phosphate to yield 1-deoxy-D-xylulose-5-phosphate (DXP). Is a limiting enzyme for plastidic isoprenoid biosynthesis and essential for chloroplast development. In Oryza sativa subsp. japonica (Rice), this protein is Probable 1-deoxy-D-xylulose-5-phosphate synthase 2, chloroplastic.